We begin with the raw amino-acid sequence, 79 residues long: Acyl carrier protein (79 aa).

The Carrier domain occupies 2–77; the sequence is SSIEERVKKI…QAVDYINKHL (76 aa). O-(pantetheine 4'-phosphoryl)serine is present on Ser37.

This sequence belongs to the acyl carrier protein (ACP) family. Post-translationally, 4'-phosphopantetheine is transferred from CoA to a specific serine of apo-ACP by AcpS. This modification is essential for activity because fatty acids are bound in thioester linkage to the sulfhydryl of the prosthetic group.

It localises to the cytoplasm. The protein operates within lipid metabolism; fatty acid biosynthesis. In terms of biological role, carrier of the growing fatty acid chain in fatty acid biosynthesis. The chain is Acyl carrier protein from Alkalilimnicola ehrlichii (strain ATCC BAA-1101 / DSM 17681 / MLHE-1).